Consider the following 161-residue polypeptide: Allophycocyanin alpha-B chain (161 aa).

Asn71 is subject to N4-methylasparagine. Cys81 lines the (2R,3E)-phycocyanobilin pocket.

The protein belongs to the phycobiliprotein family. In terms of processing, contains one covalently linked bilin chromophore.

The protein localises to the plastid. Its subcellular location is the chloroplast thylakoid membrane. Its function is as follows. Allophycocyanin is a photosynthetic bile pigment-protein complex with maximum absorption at approximately 650 nanometers. This chain is Allophycocyanin alpha-B chain (apcD), found in Pyropia yezoensis (Susabi-nori).